A 332-amino-acid polypeptide reads, in one-letter code: MSPPESVRHISVLGREAVDWLAPRDGGVYVDATFGAGGYSRAILTIDGTRVIGIDRDRTAIAGGFDLVEQSDGRLTLVESRFSQLAEVCASQGVGQVDGVVMDVGVSSMQLDQAERGFSFRFDGPLDMRMGHDGFSAAEVIAAASEADLANIFYIFGEERHSRAVARAIVAARAETPIVTTKALADLVSKVVHSKPGEIHPATRSFQGLRIFVNAELDELHLALTAAERVLKPGGRLVVVSFHSLEDRIVKNFFAERGKASSGSRHRPEMAQQQPSFAILTKRPVTPSDEETAANPRARSAKLRAGERTAAPAQPEAPLPHWPTLASVMGRR.

Residues 37–39, Asp55, Phe82, Asp103, and Gln110 each bind S-adenosyl-L-methionine; that span reads GGY. The segment at 281 to 332 is disordered; that stretch reads TKRPVTPSDEETAANPRARSAKLRAGERTAAPAQPEAPLPHWPTLASVMGRR.

This sequence belongs to the methyltransferase superfamily. RsmH family.

It localises to the cytoplasm. It carries out the reaction cytidine(1402) in 16S rRNA + S-adenosyl-L-methionine = N(4)-methylcytidine(1402) in 16S rRNA + S-adenosyl-L-homocysteine + H(+). Specifically methylates the N4 position of cytidine in position 1402 (C1402) of 16S rRNA. This Rhodopseudomonas palustris (strain BisA53) protein is Ribosomal RNA small subunit methyltransferase H.